The sequence spans 215 residues: MGRGKIEIKRIENSSNRQVTYSKRRNGIMKKAKEISVLCDAHVSVIIFASSGKMHEFCSPSTTLVDMLDHYHKLSGKRLWDPKHEHLDNEINRVKKENDSMQIELRHLKGEDITTLNYKELMVLEDALENGTSALKNKQMEFVRMMRKHNEMVEEENQSLQFKLRQMHLDPMNDNVMESQAVYDHHHHQNIADYEAQMPFAFRVQPMQPNLQERF.

One can recognise an MADS-box domain in the interval 3–57 (RGKIEIKRIENSSNRQVTYSKRRNGIMKKAKEISVLCDAHVSVIIFASSGKMHEF). The K-box domain occupies 84-170 (HEHLDNEINR…QFKLRQMHLD (87 aa)).

The protein resides in the nucleus. Transcription factor involved in the genetic control of flower development. Acts in conjunction with DEFICIENS (defA). This Antirrhinum majus (Garden snapdragon) protein is Floral homeotic protein GLOBOSA (GLO).